The chain runs to 403 residues: Aloesone synthase (403 aa).

Cys-174 is a catalytic residue. CoA-binding positions include Ser-281 and 318 to 321 (GGRA).

The protein belongs to the thiolase-like superfamily. Chalcone/stilbene synthases family. As to quaternary structure, homodimer.

It functions in the pathway secondary metabolite biosynthesis; flavonoid biosynthesis. Catalyzes the iterative condensations of 6, 7 or 8 molecules of malonyl-CoA to produce various aromatic polyketides. Produces the heptaketide aloesone, the aglycone of aloesin, from 7 molecules of malonyl-CoA as a major product. Also able to produce a hexaketide pyrone, a heptaketide 6-(2-acetyl-3,5-dihydroxybenzyl)-4-hydroxy-2-pyrone, a novel heptaketide 6-(2-(2,4-dihydroxy-6-methylphenyl)-2-oxoethyl)-4-hydroxy-2-pyrone and octaketides SEK4/SEK4b. The chain is Aloesone synthase (PKS3) from Aloe arborescens (Kidachi aloe).